The sequence spans 368 residues: uncharacterized protein (368 aa).

The 118-residue stretch at 3–120 (KILLADDERI…QIISSLEEII (118 aa)) folds into the Response regulatory domain. A 4-aspartylphosphate modification is found at Asp55. In terms of domain architecture, HTH araC/xylS-type spans 259–361 (SKMIRLIADE…GLTPSEFRRK (103 aa)). 2 DNA-binding regions (H-T-H motif) span residues 278-299 (WAAKDMLFMNPDYLGKLFKQET) and 327-351 (VSEIAEEIGFGDNPKYFSLVFKKYT).

Post-translationally, phosphorylated by YesM.

The protein resides in the cytoplasm. In terms of biological role, member of the two-component regulatory system YesM/YesN. This is an uncharacterized protein from Bacillus subtilis (strain 168).